The primary structure comprises 96 residues: MKFRPLGDRVLVKRVEEETKTKGGIIIPDTAKEKPQEGEVVAVGPGARNDKGDVVALDVKAGDRILFGKWSGTEVKVDGQDLLIMKESDVLGVVEA.

This sequence belongs to the GroES chaperonin family. As to quaternary structure, heptamer of 7 subunits arranged in a ring. Interacts with the chaperonin GroEL.

It is found in the cytoplasm. Functionally, together with the chaperonin GroEL, plays an essential role in assisting protein folding. The GroEL-GroES system forms a nano-cage that allows encapsulation of the non-native substrate proteins and provides a physical environment optimized to promote and accelerate protein folding. GroES binds to the apical surface of the GroEL ring, thereby capping the opening of the GroEL channel. This is Co-chaperonin GroES from Caulobacter vibrioides (strain ATCC 19089 / CIP 103742 / CB 15) (Caulobacter crescentus).